A 581-amino-acid polypeptide reads, in one-letter code: DNA primase (581 aa).

Residues 40–64 form a CHC2-type zinc finger; sequence CPFHNEKTPSFTVNGEKQFYHCFGC. In terms of domain architecture, Toprim spans 259–341; it reads QRLLVVEGYM…GRQVRFMFLP (83 aa). Positions 265, 309, and 311 each coordinate Mg(2+).

Belongs to the DnaG primase family. As to quaternary structure, monomer. Interacts with DnaB. Requires Zn(2+) as cofactor. The cofactor is Mg(2+).

The enzyme catalyses ssDNA + n NTP = ssDNA/pppN(pN)n-1 hybrid + (n-1) diphosphate.. Functionally, RNA polymerase that catalyzes the synthesis of short RNA molecules used as primers for DNA polymerase during DNA replication. In Salmonella typhimurium (strain LT2 / SGSC1412 / ATCC 700720), this protein is DNA primase.